Reading from the N-terminus, the 117-residue chain is G antigen 12B/C/D/E (117 aa).

The interval 1–117 is disordered; sequence MSWRGRSTYY…PEEGEKQSQC (117 aa). 2 stretches are compositionally biased toward acidic residues: residues 32 to 45 and 87 to 96; these read FSDE…EEGE and ECEDGPDGQE. The span at 103–117 shows a compositional bias: basic and acidic residues; it reads EEVKTPEEGEKQSQC.

The protein belongs to the GAGE family.

The chain is G antigen 12B/C/D/E (GAGE12B) from Homo sapiens (Human).